The chain runs to 414 residues: Glucose-1-phosphate adenylyltransferase (414 aa).

Alpha-D-glucose 1-phosphate-binding positions include G164, 181 to 182, and S199; that span reads EK.

The protein belongs to the bacterial/plant glucose-1-phosphate adenylyltransferase family. Homotetramer.

The enzyme catalyses alpha-D-glucose 1-phosphate + ATP + H(+) = ADP-alpha-D-glucose + diphosphate. The protein operates within glycan biosynthesis; glycogen biosynthesis. Its function is as follows. Involved in the biosynthesis of ADP-glucose, a building block required for the elongation reactions to produce glycogen. Catalyzes the reaction between ATP and alpha-D-glucose 1-phosphate (G1P) to produce pyrophosphate and ADP-Glc. This chain is Glucose-1-phosphate adenylyltransferase, found in Leifsonia xyli subsp. xyli (strain CTCB07).